A 502-amino-acid polypeptide reads, in one-letter code: Glycerol kinase (502 aa).

An ADP-binding site is contributed by T14. ATP is bound by residues T14, T15, and S16. Residue T14 participates in sn-glycerol 3-phosphate binding. R18 contributes to the ADP binding site. Residues R84, E85, Y136, and D246 each coordinate sn-glycerol 3-phosphate. The glycerol site is built by R84, E85, Y136, D246, and Q247. Residues T268 and G311 each contribute to the ADP site. ATP-binding residues include T268, G311, Q315, and G412. Residues G412 and N416 each contribute to the ADP site.

This sequence belongs to the FGGY kinase family. As to quaternary structure, homotetramer and homodimer (in equilibrium). Heterodimer with EIIA-Glc. Binds 1 zinc ion per glycerol kinase EIIA-Glc dimer. The zinc ion is important for dimerization.

The catalysed reaction is glycerol + ATP = sn-glycerol 3-phosphate + ADP + H(+). The protein operates within polyol metabolism; glycerol degradation via glycerol kinase pathway; sn-glycerol 3-phosphate from glycerol: step 1/1. Its activity is regulated as follows. Activity of this regulatory enzyme is affected by several metabolites. Allosterically and non-competitively inhibited by fructose 1,6-bisphosphate (FBP) and unphosphorylated phosphocarrier protein EIIA-Glc (III-Glc), an integral component of the bacterial phosphotransferase (PTS) system. Key enzyme in the regulation of glycerol uptake and metabolism. Catalyzes the phosphorylation of glycerol to yield sn-glycerol 3-phosphate. This Shigella dysenteriae serotype 1 (strain Sd197) protein is Glycerol kinase.